Reading from the N-terminus, the 320-residue chain is Lipoyl synthase (320 aa).

A disordered region spans residues 1 to 29 (MVTVVDRVTNRRLRHPEKAHRPDTSVQKK). Over residues 19 to 29 (AHRPDTSVQKK) the composition is skewed to basic and acidic residues. [4Fe-4S] cluster is bound by residues cysteine 59, cysteine 64, cysteine 70, cysteine 85, cysteine 89, cysteine 92, and serine 298. The region spanning 71 to 287 (WSQRHASFMI…AKIGKVKGFL (217 aa)) is the Radical SAM core domain.

The protein belongs to the radical SAM superfamily. Lipoyl synthase family. It depends on [4Fe-4S] cluster as a cofactor.

The protein resides in the cytoplasm. The catalysed reaction is [[Fe-S] cluster scaffold protein carrying a second [4Fe-4S](2+) cluster] + N(6)-octanoyl-L-lysyl-[protein] + 2 oxidized [2Fe-2S]-[ferredoxin] + 2 S-adenosyl-L-methionine + 4 H(+) = [[Fe-S] cluster scaffold protein] + N(6)-[(R)-dihydrolipoyl]-L-lysyl-[protein] + 4 Fe(3+) + 2 hydrogen sulfide + 2 5'-deoxyadenosine + 2 L-methionine + 2 reduced [2Fe-2S]-[ferredoxin]. The protein operates within protein modification; protein lipoylation via endogenous pathway; protein N(6)-(lipoyl)lysine from octanoyl-[acyl-carrier-protein]: step 2/2. Functionally, catalyzes the radical-mediated insertion of two sulfur atoms into the C-6 and C-8 positions of the octanoyl moiety bound to the lipoyl domains of lipoate-dependent enzymes, thereby converting the octanoylated domains into lipoylated derivatives. This Bartonella tribocorum (strain CIP 105476 / IBS 506) protein is Lipoyl synthase.